Reading from the N-terminus, the 357-residue chain is 4-hydroxymandelate synthase (357 aa).

VOC domains are found at residues 5–129 (EIDY…LIQR) and 158–309 (GIDH…IFTA). Residue histidine 161 participates in Fe cation binding. 5 residues coordinate substrate: histidine 161, serine 201, threonine 214, histidine 241, and glutamine 305. Histidine 241 contacts Fe cation. Glutamate 320 contacts Fe cation.

This sequence belongs to the 4HPPD family. In terms of assembly, monomer. Requires Fe cation as cofactor.

It carries out the reaction 3-(4-hydroxyphenyl)pyruvate + O2 = (S)-4-hydroxymandelate + CO2. Its pathway is antibiotic biosynthesis; vancomycin biosynthesis. Functionally, required to synthesize hydroxyphenylglycine, a recurring skeletal component of nonproteinogenic macrocyclic peptide antibiotics such as vancomycin. Catalyzes the conversion of p-hydroxyphenylpyruvate to p-hydroxymandelate. The decarboxylation and hydroxylation activities of HmaS show novel and distinct regioselectivity, compared to all other known p-hydroxyphenylpyruvate dioxygenases, by hydroxylating the benzylic position of the substrate instead of the phenyl ring. The sequence is that of 4-hydroxymandelate synthase from Amycolatopsis orientalis (Nocardia orientalis).